Here is a 379-residue protein sequence, read N- to C-terminus: Probable leucine aminopeptidase TRV_05286 (379 aa).

The N-terminal stretch at 1-18 (MKIATLAVVSAFAATAIA) is a signal peptide. Positions 182 and 201 each coordinate Zn(2+). 2 N-linked (GlcNAc...) asparagine glycosylation sites follow: asparagine 202 and asparagine 226. 2 residues coordinate Zn(2+): glutamate 240 and aspartate 267. Cysteine 312 and cysteine 316 are oxidised to a cystine. Position 345 (histidine 345) interacts with Zn(2+).

Belongs to the peptidase M28 family. M28E subfamily. Monomer. The cofactor is Zn(2+).

The protein resides in the secreted. In terms of biological role, probable extracellular aminopeptidase which contributes to pathogenicity. The sequence is that of Probable leucine aminopeptidase TRV_05286 from Trichophyton verrucosum (strain HKI 0517).